A 138-amino-acid chain; its full sequence is Protein X (138 aa).

Residues 20–43 are disordered; the sequence is PLRGQPSGPSVSGTSAGSPSSAAS. Residues 25–43 are compositionally biased toward low complexity; the sequence is PSGPSVSGTSAGSPSSAAS. The mitochondrial targeting sequence stretch occupies residues 68 to 113; that stretch reads PCCLGFTCADLRTMDSTVNFVPWHAKRQLGMMQKDFWTAYIRDQLL.

The protein belongs to the orthohepadnavirus protein X family. As to quaternary structure, may form homodimer. May interact with host CEBPA, CFLAR, CREB1, DDB1, E4F1, HBXIP, HSPD1/HSP60, NFKBIA, POLR2E and SMAD4. Interacts with host SMC5-SMC6 complex and induces its degradation. Interacts with host TRPC4AP; leading to prevent ubiquitination of TRPC4AP. Interacts with host PLSCR1; this interaction promotes ubiquitination and degradation of HBx and impairs HBx-mediated cell proliferation. A fraction may be phosphorylated in insect cells and HepG2 cells, a human hepatoblastoma cell line. Phosphorylated in vitro by host protein kinase C or mitogen-activated protein kinase. N-acetylated in insect cells.

The protein resides in the host cytoplasm. It localises to the host nucleus. The protein localises to the host mitochondrion. Functionally, multifunctional protein that plays a role in silencing host antiviral defenses and promoting viral transcription. Does not seem to be essential for HBV infection. May be directly involved in development of cirrhosis and liver cancer (hepatocellular carcinoma). Most of cytosolic activities involve modulation of cytosolic calcium. The effect on apoptosis is controversial depending on the cell types in which the studies have been conducted. May induce apoptosis by localizing in mitochondria and causing loss of mitochondrial membrane potential. May also modulate apoptosis by binding host CFLAR, a key regulator of the death-inducing signaling complex (DISC). Promotes viral transcription by using the host E3 ubiquitin ligase DDB1 to target the SMC5-SMC6 complex to proteasomal degradation. This host complex would otherwise bind to viral episomal DNA, and prevents its transcription. Moderately stimulates transcription of many different viral and cellular transcription elements. Promoters and enhancers stimulated by HBx contain DNA binding sites for NF-kappa-B, AP-1, AP-2, c-EBP, ATF/CREB, or the calcium-activated factor NF-AT. This Ground squirrel hepatitis virus (strain 27) (GSHV) protein is Protein X.